The following is a 398-amino-acid chain: MKSTSLLTASVLLGSASAAVHKLKLNKVPLDEQLYTHNIDAHVRALGQKYMGIRPNVHQELLEENSLNDMSRHDVLVDNFLNAQYFSEISLGTPPQKFKVVLDTGSSNLWVPGSDCSSIACFLHNKYDSSASSTYKANGTEFAIKYGSGELSGFVSQDTLQIGDLKVVKQDFAEATNEPGLAFAFGRFDGILGLGYDTISVNKIVPPFYNMLDQGLLDEPVFAFYLGDTNKEGDNSEASFGGVDKNHYTGELTKIPLRRKAYWEVDFDAIALGDNVAELENTGIILDTGTSLIALPSTLADLLNKEIGAKKGFTGQYSIECDKRDSLPDLTFTLAGHNFTIGPYDYTLEVQGSCISSFMGMDFPEPVGPLAILGDAFLRKWYSVYDLGNNAVGLAKAK.

A signal peptide spans Met1–Ala18. Positions Ala19–Met70 are cleaved as a propeptide — activation peptide. The Peptidase A1 domain occupies Tyr85–Ala395. Asp103 is a catalytic residue. A disulfide bridge connects residues Cys116 and Cys121. The N-linked (GlcNAc...) asparagine glycan is linked to Asn138. Residue Asp287 is part of the active site. An intrachain disulfide couples Cys321 to Cys354. An N-linked (GlcNAc...) asparagine glycan is attached at Asn338.

Belongs to the peptidase A1 family.

It localises to the vacuole lumen. The protein localises to the secreted. The enzyme catalyses Hydrolysis of proteins with broad specificity for peptide bonds. Cleaves -Leu-Leu-|-Val-Tyr- bond in a synthetic substrate. Does not act on esters of Tyr or Arg.. Its function is as follows. Vacuolar aspartic endopeptidase which is probably also secreted and contributes to virulence. This chain is Vacuolar protease A (pep2), found in Aspergillus fumigatus (strain ATCC MYA-4609 / CBS 101355 / FGSC A1100 / Af293) (Neosartorya fumigata).